Reading from the N-terminus, the 33-residue chain is Neutrophil defensin 1 (33 aa).

3 disulfides stabilise this stretch: C3-C31, C5-C20, and C10-C30.

It belongs to the alpha-defensin family.

It localises to the secreted. In terms of biological role, anti-fungal and bactericidal activity, greater against Gram-positive bacteria. This is Neutrophil defensin 1 from Mesocricetus auratus (Golden hamster).